A 186-amino-acid chain; its full sequence is ATP synthase subunit b (186 aa).

Residues 28 to 48 (IVWSIIPFAVILFVFAKVVLP) form a helical membrane-spanning segment.

It belongs to the ATPase B chain family. In terms of assembly, F-type ATPases have 2 components, F(1) - the catalytic core - and F(0) - the membrane proton channel. F(1) has five subunits: alpha(3), beta(3), gamma(1), delta(1), epsilon(1). F(0) has three main subunits: a(1), b(2) and c(10-14). The alpha and beta chains form an alternating ring which encloses part of the gamma chain. F(1) is attached to F(0) by a central stalk formed by the gamma and epsilon chains, while a peripheral stalk is formed by the delta and b chains.

The protein localises to the cell membrane. In terms of biological role, f(1)F(0) ATP synthase produces ATP from ADP in the presence of a proton or sodium gradient. F-type ATPases consist of two structural domains, F(1) containing the extramembraneous catalytic core and F(0) containing the membrane proton channel, linked together by a central stalk and a peripheral stalk. During catalysis, ATP synthesis in the catalytic domain of F(1) is coupled via a rotary mechanism of the central stalk subunits to proton translocation. Its function is as follows. Component of the F(0) channel, it forms part of the peripheral stalk, linking F(1) to F(0). The protein is ATP synthase subunit b of Corynebacterium urealyticum (strain ATCC 43042 / DSM 7109).